The chain runs to 211 residues: ATP phosphoribosyltransferase (211 aa).

This sequence belongs to the ATP phosphoribosyltransferase family. Short subfamily. In terms of assembly, heteromultimer composed of HisG and HisZ subunits.

The protein resides in the cytoplasm. The catalysed reaction is 1-(5-phospho-beta-D-ribosyl)-ATP + diphosphate = 5-phospho-alpha-D-ribose 1-diphosphate + ATP. It functions in the pathway amino-acid biosynthesis; L-histidine biosynthesis; L-histidine from 5-phospho-alpha-D-ribose 1-diphosphate: step 1/9. Functionally, catalyzes the condensation of ATP and 5-phosphoribose 1-diphosphate to form N'-(5'-phosphoribosyl)-ATP (PR-ATP). Has a crucial role in the pathway because the rate of histidine biosynthesis seems to be controlled primarily by regulation of HisG enzymatic activity. The protein is ATP phosphoribosyltransferase of Pseudomonas aeruginosa (strain UCBPP-PA14).